Consider the following 514-residue polypeptide: Na(+)/H(+) antiporter NhaB (514 aa).

The next 12 membrane-spanning stretches (helical) occupy residues 23-43 (LALL…PFIA), 63-83 (PLLP…TSAA), 97-117 (LLLM…LFIF), 120-140 (LLLS…AAAF), 144-164 (FLDA…FYGI), 202-222 (LMMH…VGEP), 238-258 (FFLR…LTCM), 303-323 (AVIG…VGLI), 357-377 (LTVF…APII), 391-411 (LFYL…VGTI), 447-467 (ATPN…APLI), and 475-495 (VWMA…CVEF).

The protein belongs to the NhaB Na(+)/H(+) (TC 2.A.34) antiporter family.

The protein localises to the cell inner membrane. It catalyses the reaction 2 Na(+)(in) + 3 H(+)(out) = 2 Na(+)(out) + 3 H(+)(in). Its function is as follows. Na(+)/H(+) antiporter that extrudes sodium in exchange for external protons. This Salmonella newport (strain SL254) protein is Na(+)/H(+) antiporter NhaB.